A 278-amino-acid polypeptide reads, in one-letter code: Pantothenate synthetase (278 aa).

31 to 38 is a binding site for ATP; sequence MGALHEGH. The Proton donor role is filled by His-38. Gln-62 serves as a coordination point for (R)-pantoate. Gln-62 serves as a coordination point for beta-alanine. 148–151 is an ATP binding site; that stretch reads GEKD. Gln-154 is a binding site for (R)-pantoate. Residues Leu-177 and 185–188 contribute to the ATP site; that span reads MSSR.

Belongs to the pantothenate synthetase family. In terms of assembly, homodimer.

The protein resides in the cytoplasm. The catalysed reaction is (R)-pantoate + beta-alanine + ATP = (R)-pantothenate + AMP + diphosphate + H(+). The protein operates within cofactor biosynthesis; (R)-pantothenate biosynthesis; (R)-pantothenate from (R)-pantoate and beta-alanine: step 1/1. Functionally, catalyzes the condensation of pantoate with beta-alanine in an ATP-dependent reaction via a pantoyl-adenylate intermediate. This chain is Pantothenate synthetase, found in Acidiphilium cryptum (strain JF-5).